The chain runs to 816 residues: Acyl-homoserine lactone acylase QuiP (816 aa).

Positions 1–33 (MASPALSHFLPRFGVAAAVAGVLSLTGCQTWNA) are cleaved as a signal peptide. Serine 262 functions as the Nucleophile in the catalytic mechanism.

The protein belongs to the peptidase S45 family. As to quaternary structure, heterodimer of an alpha subunit and a beta subunit processed from the same precursor.

Its subcellular location is the periplasm. It catalyses the reaction an N-acyl-L-homoserine lactone + H2O = L-homoserine lactone + a carboxylate. Catalyzes the deacylation of acyl-homoserine lactone (AHL or acyl-HSL), releasing homoserine lactone (HSL) and the corresponding fatty acid. Possesses a specificity for the degradation of long-chain acyl-HSLs (side chains of seven or more carbons in length). This chain is Acyl-homoserine lactone acylase QuiP (quiP), found in Pseudomonas fluorescens (strain Pf0-1).